Here is a 228-residue protein sequence, read N- to C-terminus: Demethylmenaquinone methyltransferase (228 aa).

S-adenosyl-L-methionine contacts are provided by residues Thr-62, Asp-80, 100 to 101 (DA), and Ser-117.

Belongs to the class I-like SAM-binding methyltransferase superfamily. MenG/UbiE family.

It catalyses the reaction a 2-demethylmenaquinol + S-adenosyl-L-methionine = a menaquinol + S-adenosyl-L-homocysteine + H(+). The protein operates within quinol/quinone metabolism; menaquinone biosynthesis; menaquinol from 1,4-dihydroxy-2-naphthoate: step 2/2. Methyltransferase required for the conversion of demethylmenaquinol (DMKH2) to menaquinol (MKH2). This chain is Demethylmenaquinone methyltransferase, found in Mycolicibacterium gilvum (strain PYR-GCK) (Mycobacterium gilvum (strain PYR-GCK)).